The following is a 366-amino-acid chain: Alanine racemase (366 aa).

The Proton acceptor; specific for D-alanine role is filled by lysine 33. Lysine 33 carries the N6-(pyridoxal phosphate)lysine modification. Arginine 129 serves as a coordination point for substrate. Tyrosine 253 (proton acceptor; specific for L-alanine) is an active-site residue. Methionine 301 provides a ligand contact to substrate.

It belongs to the alanine racemase family. Pyridoxal 5'-phosphate serves as cofactor.

It catalyses the reaction L-alanine = D-alanine. It participates in amino-acid biosynthesis; D-alanine biosynthesis; D-alanine from L-alanine: step 1/1. Catalyzes the interconversion of L-alanine and D-alanine. May also act on other amino acids. This Xanthomonas axonopodis pv. citri (strain 306) protein is Alanine racemase (alr).